A 92-amino-acid polypeptide reads, in one-letter code: Small ribosomal subunit protein uS19 (92 aa).

Belongs to the universal ribosomal protein uS19 family.

In terms of biological role, protein S19 forms a complex with S13 that binds strongly to the 16S ribosomal RNA. This is Small ribosomal subunit protein uS19 from Trichlorobacter lovleyi (strain ATCC BAA-1151 / DSM 17278 / SZ) (Geobacter lovleyi).